The sequence spans 203 residues: Pro-FMRFamide-related neuropeptide VF (203 aa).

The N-terminal stretch at 1–26 is a signal peptide; sequence MEIISSKRFILLTLATSSFLTSNTLC. A propeptide spanning residues 27 to 57 is cleaved from the precursor; sequence SDELMMPHFHSKEGYGKYYQLRGIPKGVKER. Phe-94 carries the phenylalanine amide modification. The propeptide occupies 97–106; the sequence is NIEDRRSPRA. Phe-125 is modified (phenylalanine amide). Positions 128–203 are excised as a propeptide; sequence TTARRITKTL…QPVLQGAMKL (76 aa). Positions 161–186 are disordered; that stretch reads HQEIQSPGQEQPRKRVFTETDDAERK. The segment covering 171–186 has biased composition (basic and acidic residues); sequence QPRKRVFTETDDAERK.

This sequence belongs to the FARP (FMRFamide related peptide) family. As to expression, isoform 1 is expressed at high levels in the hypothalamus and eye. Isoform 2 is specifically expressed in a region between the dorsomedial hypothalamic and ventromedial hypothalamic nuclei.

It localises to the secreted. Functionally, efficiently inhibits forskolin-induced production of cAMP. Acts as a potent negative regulator of gonadotropin synthesis and secretion. Induces secretion of prolactin. Its function is as follows. Efficiently inhibits forskolin-induced production of cAMP. Blocks morphine-induced analgesia. The polypeptide is Pro-FMRFamide-related neuropeptide VF (Npvf) (Rattus norvegicus (Rat)).